The primary structure comprises 92 residues: Small integral membrane protein 12 (92 aa).

Residues 15-34 form a helical membrane-spanning segment; the sequence is YVTFPVAFVVGAVGYHLEWF.

Belongs to the SMIM12 family.

The protein resides in the membrane. This is Small integral membrane protein 12 (SMIM12) from Nomascus leucogenys (Northern white-cheeked gibbon).